The sequence spans 568 residues: Pyruvate carboxylase subunit B (568 aa).

One can recognise a Pyruvate carboxyltransferase domain in the interval 4 to 264; it reads IKVVETAFRD…DTGLDLEILK (261 aa). Residues 12 to 16 and Arg-83 contribute to the substrate site; that span reads RDAHQ. Residue Asp-13 participates in a divalent metal cation binding. 3 residues coordinate a divalent metal cation: Lys-174, His-203, and His-205. Lys-174 is subject to N6-carboxylysine. Thr-339 contacts substrate. Residues 493 to 568 form the Biotinyl-binding domain; sequence PEPVDVEGAV…ETGDIIMVIK (76 aa). Residue Lys-534 is modified to N6-biotinyllysine.

As to quaternary structure, heterooctamer of four A and four B subunits. Requires Mg(2+) as cofactor. Mn(2+) serves as cofactor. The cofactor is Co(2+).

The catalysed reaction is hydrogencarbonate + pyruvate + ATP = oxaloacetate + ADP + phosphate + H(+). Inhibited by ADP and alpha-ketoglutarate. Its function is as follows. Pyruvate carboxylase catalyzes a 2-step reaction, involving the ATP-dependent carboxylation of the covalently attached biotin in the first step and the transfer of the carboxyl group to pyruvate in the second. This is Pyruvate carboxylase subunit B (pycB) from Methanothermobacter thermautotrophicus (strain ATCC 29096 / DSM 1053 / JCM 10044 / NBRC 100330 / Delta H) (Methanobacterium thermoautotrophicum).